The primary structure comprises 118 residues: Basic phospholipase A2 PA-12A (118 aa).

7 disulfide bridges follow: C11–C71, C27–C117, C29–C45, C44–C98, C51–C91, C60–C84, and C78–C89. Y28, G30, and G32 together coordinate Ca(2+). H48 is an active-site residue. A Ca(2+)-binding site is contributed by D49. Residue D92 is part of the active site.

The protein belongs to the phospholipase A2 family. Group I subfamily. D49 sub-subfamily. It depends on Ca(2+) as a cofactor. In terms of tissue distribution, expressed by the venom gland.

Its subcellular location is the secreted. The catalysed reaction is a 1,2-diacyl-sn-glycero-3-phosphocholine + H2O = a 1-acyl-sn-glycero-3-phosphocholine + a fatty acid + H(+). In terms of biological role, PLA2 catalyzes the calcium-dependent hydrolysis of the 2-acyl groups in 3-sn-phosphoglycerides. The polypeptide is Basic phospholipase A2 PA-12A (Pseudechis australis (Mulga snake)).